A 108-amino-acid polypeptide reads, in one-letter code: Iron-sulfur cluster assembly protein CyaY (108 aa).

Belongs to the frataxin family.

Involved in iron-sulfur (Fe-S) cluster assembly. May act as a regulator of Fe-S biogenesis. This chain is Iron-sulfur cluster assembly protein CyaY, found in Pseudomonas paraeruginosa (strain DSM 24068 / PA7) (Pseudomonas aeruginosa (strain PA7)).